The following is a 471-amino-acid chain: G2/mitotic-specific cyclin-1 (471 aa).

Belongs to the cyclin family. Cyclin AB subfamily.

Its function is as follows. Essential for the control of the cell cycle at the G2/M (mitosis) transition. Interacts with the CDC2 protein kinase to form MPF. G2/M cyclins accumulate steadily during G2 and are abruptly destroyed at mitosis. This is G2/mitotic-specific cyclin-1 (CLB1) from Saccharomyces cerevisiae (strain ATCC 204508 / S288c) (Baker's yeast).